Consider the following 328-residue polypeptide: MSDVLSQEEINQLIEALMKGELKEEDLLKEEEEKKVKPYDFKRPSKFSKEQLRTFQMIHENFGRALSTYLSGRLRTFVDVEISIDQLTYEEFIRSVMIPSFIVIFTGDVFEGSAIFEMRLDLFYTMLDIIMGGPGENPPNRPPTEIETSIMRKEVTNMLTLLAQAWSDFQYFIPSIENVETNPQFVQIVPPNEIVLLVTASVSWGEFTSFINVCWPFSLLEPLLEKLSDRFWMMGRKPEKVEERMEELRKASQKIPVTVQAVIGETELRLKEILDLEVGDVIRLGTHYKDEIRIDVEGRPKFRGIPGVFKGKYAVKVTGEFTNGGEYE.

An interaction with unphosphorylated CheY region spans residues 1–45 (MSDVLSQEEINQLIEALMKGELKEEDLLKEEEEKKVKPYDFKRPS).

The protein belongs to the FliM family. In terms of assembly, interacts (via N-terminus) with unphosphorylated CheY. Interacts (via central domain) with FliG (via central domain or via central domain and C-terminus).

It is found in the cell inner membrane. Its subcellular location is the bacterial flagellum basal body. In terms of biological role, fliM is one of three proteins (FliG, FliN, FliM) that forms the rotor-mounted switch complex (C ring), located at the base of the basal body. This complex interacts with the CheY and CheX chemotaxis proteins, in addition to contacting components of the motor that determine the direction of flagellar rotation. This is Flagellar motor switch protein FliM from Thermotoga maritima (strain ATCC 43589 / DSM 3109 / JCM 10099 / NBRC 100826 / MSB8).